A 95-amino-acid polypeptide reads, in one-letter code: Co-chaperonin GroES (95 aa).

This sequence belongs to the GroES chaperonin family. Heptamer of 7 subunits arranged in a ring. Interacts with the chaperonin GroEL.

It is found in the cytoplasm. In terms of biological role, together with the chaperonin GroEL, plays an essential role in assisting protein folding. The GroEL-GroES system forms a nano-cage that allows encapsulation of the non-native substrate proteins and provides a physical environment optimized to promote and accelerate protein folding. GroES binds to the apical surface of the GroEL ring, thereby capping the opening of the GroEL channel. The polypeptide is Co-chaperonin GroES (Rhodobacter capsulatus (Rhodopseudomonas capsulata)).